A 457-amino-acid chain; its full sequence is Glutamate--tRNA ligase 1 (457 aa).

The short motif at 9–19 (PSPTGYIHIGN) is the 'HIGH' region element. A 'KMSKS' region motif is present at residues 250–254 (GLSKR). Lysine 253 contributes to the ATP binding site.

This sequence belongs to the class-I aminoacyl-tRNA synthetase family. Glutamate--tRNA ligase type 1 subfamily. In terms of assembly, monomer.

It localises to the cytoplasm. It carries out the reaction tRNA(Glu) + L-glutamate + ATP = L-glutamyl-tRNA(Glu) + AMP + diphosphate. Catalyzes the attachment of glutamate to tRNA(Glu) in a two-step reaction: glutamate is first activated by ATP to form Glu-AMP and then transferred to the acceptor end of tRNA(Glu). The polypeptide is Glutamate--tRNA ligase 1 (Brucella ovis (strain ATCC 25840 / 63/290 / NCTC 10512)).